The primary structure comprises 492 residues: WD repeat-containing protein JIP5 (492 aa).

5 WD repeats span residues 127-166 (RHKGSVRAMCFDSKGDNIFSVGSDNVLKKANTMTGKVVKK), 178-217 (KKNDKFTKLCASQTHPFILIGDESGNIHVINSENLALSNS), 236-274 (RSAYKFISLGQTTLAYFDVRDKDAKPNVAGNEDGKILIS), 276-317 (DQED…LEDQ), and 365-405 (RNHN…VEEN). 2 stretches are compositionally biased toward acidic residues: residues 404-414 (ENASVESDSDE) and 422-433 (DLSDDTSSDDET). The disordered stretch occupies residues 404-472 (ENASVESDSD…SKSVKKRKIM (69 aa)). Over residues 449-462 (KDLKEDHQEEKESN) the composition is skewed to basic and acidic residues.

This sequence belongs to the WD repeat WDR55 family. In terms of assembly, interacts with BRE1, BUD27 and GIS1.

Its subcellular location is the nucleus. It is found in the nucleolus. This is WD repeat-containing protein JIP5 (JIP5) from Saccharomyces cerevisiae (strain YJM789) (Baker's yeast).